Consider the following 448-residue polypeptide: Binary larvicide subunit BinB (448 aa).

The interval 19–200 is beta-trefoil domain; sequence TNYPLNTTPT…FVNSSFYAAA (182 aa). A disulfide bridge connects residues Cys-67 and Cys-161. A probable pore-forming domain region spans residues 226-407; sequence PKDAVRAVKG…APITNPLTLT (182 aa).

Belongs to the toxin_10 family. In terms of assembly, forms a heterodimer with BinA. In terms of processing, processed by proteases extracted from mosquito larval gut.

It is found in the spore. The protein localises to the perispore. In terms of biological role, component of a binary toxin active against Culex and some Aedes mosquito larvae. This subunit is responsible for localized binding to specific regions of the host larval gut. The individual subunits are not toxic. BinAB and this subunit alone bind to the gastric caecum and posterior midgut of C.quinquefasciatus larvae. Binary toxin internalization into host gut cells requires both proteins. Does not bind to the midgut of Aedes aegypti. Toxic to Aedes atropalpus mosquito larvae; mortality towards both C.quinquefasciatus and A.atropalpus is maximal by 48 hours. A.aegypti is not very susceptible to this toxin. Binding component of binary toxin. The 51 kDa polypeptide acts synergetically with the 42 kDa polypeptide for expression of a larvicidal toxin. The polypeptide is Binary larvicide subunit BinB (Lysinibacillus sphaericus (Bacillus sphaericus)).